A 594-amino-acid chain; its full sequence is NADH-ubiquinone oxidoreductase chain 5 (594 aa).

Transmembrane regions (helical) follow at residues 1-21 (MNLFSSTTLTMLFVLTLPIMM), 43-63 (AFLISLVPMIAFTNTGQEMII), 87-107 (IVFAPVALFVTWSIMEFSMWY), 114-134 (INQFFKYLLLFLITMMILVTA), 137-157 (LFQLFIGWEGVGIMSFLLIGW), 171-191 (AILYNRIGDVGFIMAMAWFLS), 211-233 (LPLMGLILAATGKSAQFGLHPWL), 241-261 (TPVSALLHSSTMVVAGVFLLI), 272-292 (LMQTITMCLGAITTLFTAMCA), 301-320 (IIAFSTSSQLGLMMVTIGIN), 325-347 (AFLHICTHAFFKAMLFMCSGSII), 366-386 (MPFTTTTLIVGSMALTGVPFL), 409-429 (LLITLVATSLTAVYSTRIIFF), 457-477 (LMAGSIFAGFILSHNLPPMTT), and 486-506 (LKMTALAVTMLGFTLAFEITL).

Belongs to the complex I subunit 5 family. As to quaternary structure, core subunit of respiratory chain NADH dehydrogenase (Complex I) which is composed of 45 different subunits.

The protein resides in the mitochondrion inner membrane. It catalyses the reaction a ubiquinone + NADH + 5 H(+)(in) = a ubiquinol + NAD(+) + 4 H(+)(out). Its function is as follows. Core subunit of the mitochondrial membrane respiratory chain NADH dehydrogenase (Complex I) which catalyzes electron transfer from NADH through the respiratory chain, using ubiquinone as an electron acceptor. Essential for the catalytic activity and assembly of complex I. The sequence is that of NADH-ubiquinone oxidoreductase chain 5 (MT-ND5) from Hippopotamus amphibius (Hippopotamus).